Here is a 229-residue protein sequence, read N- to C-terminus: Potassium/proton antiporter CemA (229 aa).

3 helical membrane-spanning segments follow: residues 7–27 (LTPLPYLASIVFLPWWISLSF), 106–126 (IILHFSTNIITLTILSGFFIM), and 189–209 (IISGLVSTFPVILDTILKYWI).

It belongs to the CemA family.

The protein resides in the plastid. The protein localises to the chloroplast inner membrane. The catalysed reaction is K(+)(in) + H(+)(out) = K(+)(out) + H(+)(in). Contributes to K(+)/H(+) antiport activity by supporting proton efflux to control proton extrusion and homeostasis in chloroplasts in a light-dependent manner to modulate photosynthesis. Prevents excessive induction of non-photochemical quenching (NPQ) under continuous-light conditions. Indirectly promotes efficient inorganic carbon uptake into chloroplasts. The polypeptide is Potassium/proton antiporter CemA (Ceratophyllum demersum (Rigid hornwort)).